Consider the following 700-residue polypeptide: Transketolase (700 aa).

Thr-2 bears the N-acetylthreonine mark. Substrate is bound at residue His-45. Thiamine diphosphate contacts are provided by residues Thr-48, His-85, 133-135, and Leu-135; that span reads GPL. Asp-177 contributes to the Mg(2+) binding site. Residues Gly-178 and Asn-207 each coordinate thiamine diphosphate. Mg(2+)-binding residues include Asn-207 and Ile-209. His-283, Arg-378, and Ser-405 together coordinate substrate. Thiamine diphosphate is bound at residue His-283. The active-site Proton donor is the Glu-441. Phe-467 contributes to the thiamine diphosphate binding site. Positions 491, 499, and 552 each coordinate substrate.

It belongs to the transketolase family. Homodimer. The cofactor is Mg(2+). Ca(2+) is required as a cofactor. Requires Mn(2+) as cofactor. It depends on Co(2+) as a cofactor. Thiamine diphosphate serves as cofactor.

It carries out the reaction D-sedoheptulose 7-phosphate + D-glyceraldehyde 3-phosphate = aldehydo-D-ribose 5-phosphate + D-xylulose 5-phosphate. Functionally, catalyzes the reversible transfer of a two-carbon ketol group from sedoheptulose-7-phosphate to glyceraldehyde-3-phosphate, producing xylulose-5-phosphate and ribose-5-phosphate. Catalyzes the transfer of a two-carbon ketol group from a ketose donor to an aldose acceptor, via a covalent intermediate with the cofactor thiamine pyrophosphate. This chain is Transketolase (tkt), found in Mycobacterium tuberculosis (strain ATCC 25618 / H37Rv).